Here is a 417-residue protein sequence, read N- to C-terminus: Exodeoxyribonuclease 7 large subunit (417 aa).

It belongs to the XseA family. As to quaternary structure, heterooligomer composed of large and small subunits.

Its subcellular location is the cytoplasm. The catalysed reaction is Exonucleolytic cleavage in either 5'- to 3'- or 3'- to 5'-direction to yield nucleoside 5'-phosphates.. In terms of biological role, bidirectionally degrades single-stranded DNA into large acid-insoluble oligonucleotides, which are then degraded further into small acid-soluble oligonucleotides. The sequence is that of Exodeoxyribonuclease 7 large subunit from Helicobacter hepaticus (strain ATCC 51449 / 3B1).